The sequence spans 655 residues: Probable glucan endo-1,3-beta-glucosidase btgC (655 aa).

2 disordered regions span residues 1 to 61 (MSGD…ATPG) and 89 to 114 (SGVD…PGSD). Over 1-282 (MSGDPRSFSF…PKPGTGSRKR (282 aa)) the chain is Cytoplasmic. Positions 19–33 (DSSQQPLHPTNTMAD) are enriched in polar residues. The segment covering 89–98 (SGVDAFRDTD) has biased composition (basic and acidic residues). The helical; Signal-anchor for type II membrane protein transmembrane segment at 283 to 303 (GWIVGIILAVVIVGAIVGGAV) threads the bilayer. Residues 304–655 (GGTLGNREKE…IPDCGGKTAT (352 aa)) lie on the Extracellular side of the membrane. The segment at 305 to 338 (GTLGNREKESPSSSETASGDEKVNGDLGKDSDEI) is disordered. The span at 323 to 338 (GDEKVNGDLGKDSDEI) shows a compositional bias: basic and acidic residues. The N-linked (GlcNAc...) asparagine glycan is linked to Asn-426. Glu-458 serves as the catalytic Proton donor. Catalysis depends on Glu-557, which acts as the Nucleophile. Asn-576 and Asn-602 each carry an N-linked (GlcNAc...) asparagine glycan.

The protein belongs to the glycosyl hydrolase 17 family.

The protein resides in the cell membrane. It catalyses the reaction Hydrolysis of (1-&gt;3)-beta-D-glucosidic linkages in (1-&gt;3)-beta-D-glucans.. Glucanases play a role in cell expansion during growth, in cell-cell fusion during mating, and in spore release during sporulation. This enzyme may be involved in beta-glucan degradation. Active on laminarin and lichenan. The protein is Probable glucan endo-1,3-beta-glucosidase btgC (btgC) of Aspergillus terreus (strain NIH 2624 / FGSC A1156).